The following is a 263-amino-acid chain: Troponin T, slow skeletal muscle (263 aa).

Positions 1–38 (MSDAEEQEYEEEQPEEEEAAEEEEEAPEEPEPAAEPEE) are enriched in acidic residues. Disordered regions lie at residues 1–64 (MSDA…RVDF) and 109–154 (AERA…KKKV). Phosphoserine; by CK2 is present on Ser-2. Positions 44–56 (SRPVVPPLIPPKI) are enriched in pro residues. The span at 109 to 150 (AERAEQQRFRTEKERERQAKLAEEKMRKEEEEAKKRAEDDAK) shows a compositional bias: basic and acidic residues.

The protein belongs to the troponin T family. As to quaternary structure, interacts with TPM3. As to expression, expressed dominantly in slow muscles, like masseter, diaphragm, psoas major and spinnalis. Isoform 2 is also expressed in fast muscles.

In terms of biological role, troponin T is the tropomyosin-binding subunit of troponin, the thin filament regulatory complex which confers calcium-sensitivity to striated muscle actomyosin ATPase activity. This is Troponin T, slow skeletal muscle (TNNT1) from Bos taurus (Bovine).